A 674-amino-acid polypeptide reads, in one-letter code: Glutaminase kidney isoform, mitochondrial (674 aa).

The transit peptide at 1 to 54 directs the protein to the mitochondrion; the sequence is MMRLRGSAMLRELLLRPPAAVGGVLRRTQPLGTLCRRPRGGSRPAAGLVAAARL. A disordered region spans residues 56 to 123; it reads PWWGGGGRAK…PGETDAFGNS (68 aa). The segment covering 58-71 has biased composition (gly residues); the sequence is WGGGGRAKGPGSGG. A compositionally biased stretch (low complexity) spans 89 to 101; that stretch reads PPQQQQQQQQQPG. Residues lysine 135 and lysine 169 each carry the N6-succinyllysine modification. Serine 291 serves as a coordination point for substrate. Lysine 316 carries the N6-acetyllysine modification. The highly mobile activation loop stretch occupies residues 320–327; it reads GLRFNKLF. Residues asparagine 340, glutamate 386, asparagine 393, tyrosine 419, tyrosine 471, and valine 489 each coordinate substrate. 2 ANK repeats span residues 590–619 and 624–653; these read DSRT…VNPF and WNNT…QYTP. Residues 652 to 674 are disordered; the sequence is TPQGDSDDGKENQTVHKNLDGLL. A Phosphoserine modification is found at serine 657. Residues 658–674 are compositionally biased toward basic and acidic residues; the sequence is DDGKENQTVHKNLDGLL.

This sequence belongs to the glutaminase family. As to quaternary structure, homotetramer, dimer of dimers. Tetramer composed of 68 and 65 kDa peptides in a 1:3 ratio. Can assemble into higher oligomers (in vitro), but the physiological significance of this is not clear. Interacts with RAF1 and MAP2K2. Interacts with ATCAY; the interaction is direct and may control GLS localization, negatively regulating its activity. In terms of processing, synthesized as a 74-kDa cytosolic precursor which is proteolytically processed by the mitochondrial-processing peptidase (MPP) via a 72-kDa intermediate to yield the mature mitochondrial 68- and 65-kDa subunits. In terms of tissue distribution, kidney, brain, and intestine.

The protein resides in the mitochondrion. It is found in the cytoplasm. It localises to the cytosol. Its subcellular location is the mitochondrion matrix. The catalysed reaction is L-glutamine + H2O = L-glutamate + NH4(+). Its activity is regulated as follows. Enzyme activity is increased by phosphate, due to increased kcat and increased substrate affinity. Functionally, catalyzes the first reaction in the primary pathway for the renal catabolism of glutamine. Plays a role in maintaining acid-base homeostasis. Regulates the levels of the neurotransmitter glutamate, the main excitatory neurotransmitter in the brain. The protein is Glutaminase kidney isoform, mitochondrial (Gls) of Rattus norvegicus (Rat).